Here is a 326-residue protein sequence, read N- to C-terminus: Putative [LysW]-lysine/[LysW]-ornithine hydrolase (326 aa).

His66 lines the Zn(2+) pocket. Asp68 is an active-site residue. Residue Asp90 participates in Zn(2+) binding. Glu117 acts as the Proton acceptor in catalysis. Residues Glu118, Glu139, and His297 each coordinate Zn(2+).

It belongs to the peptidase M20A family. LysK subfamily. Zn(2+) is required as a cofactor. The cofactor is Co(2+).

The protein localises to the cytoplasm. The enzyme catalyses [amino-group carrier protein]-C-terminal-gamma-(L-lysyl)-L-glutamate + H2O = [amino-group carrier protein]-C-terminal-L-glutamate + L-lysine. The catalysed reaction is [amino-group carrier protein]-C-terminal-gamma-(L-ornithyl)-L-glutamate + H2O = [amino-group carrier protein]-C-terminal-L-glutamate + L-ornithine. The protein operates within amino-acid biosynthesis; L-lysine biosynthesis via AAA pathway; L-lysine from L-alpha-aminoadipate (Thermus route): step 5/5. It participates in amino-acid biosynthesis; L-arginine biosynthesis. In terms of biological role, catalyzes the release of L-lysine from [LysW]-gamma-L-lysine and the release of L-ornithine from [LysW]-L-ornithine. This Pyrococcus furiosus (strain ATCC 43587 / DSM 3638 / JCM 8422 / Vc1) protein is Putative [LysW]-lysine/[LysW]-ornithine hydrolase.